Consider the following 337-residue polypeptide: Holliday junction branch migration complex subunit RuvB (337 aa).

Residues 4–186 (ADRLIAADNP…FGIVQRLEYY (183 aa)) are large ATPase domain (RuvB-L). Residues Ile-25, Arg-26, Gly-67, Lys-70, Thr-71, Thr-72, 133–135 (EDY), Arg-176, Tyr-186, and Arg-223 contribute to the ATP site. Thr-71 lines the Mg(2+) pocket. The segment at 187 to 257 (KVEDLQHIVQ…IADKALNMLD (71 aa)) is small ATPAse domain (RuvB-S). The interval 260-337 (VRGFDYMDRK…LHFGIDKPDK (78 aa)) is head domain (RuvB-H). DNA-binding residues include Arg-296, Arg-315, and Arg-320.

This sequence belongs to the RuvB family. As to quaternary structure, homohexamer. Forms an RuvA(8)-RuvB(12)-Holliday junction (HJ) complex. HJ DNA is sandwiched between 2 RuvA tetramers; dsDNA enters through RuvA and exits via RuvB. An RuvB hexamer assembles on each DNA strand where it exits the tetramer. Each RuvB hexamer is contacted by two RuvA subunits (via domain III) on 2 adjacent RuvB subunits; this complex drives branch migration. In the full resolvosome a probable DNA-RuvA(4)-RuvB(12)-RuvC(2) complex forms which resolves the HJ.

The protein resides in the cytoplasm. The catalysed reaction is ATP + H2O = ADP + phosphate + H(+). Its function is as follows. The RuvA-RuvB-RuvC complex processes Holliday junction (HJ) DNA during genetic recombination and DNA repair, while the RuvA-RuvB complex plays an important role in the rescue of blocked DNA replication forks via replication fork reversal (RFR). RuvA specifically binds to HJ cruciform DNA, conferring on it an open structure. The RuvB hexamer acts as an ATP-dependent pump, pulling dsDNA into and through the RuvAB complex. RuvB forms 2 homohexamers on either side of HJ DNA bound by 1 or 2 RuvA tetramers; 4 subunits per hexamer contact DNA at a time. Coordinated motions by a converter formed by DNA-disengaged RuvB subunits stimulates ATP hydrolysis and nucleotide exchange. Immobilization of the converter enables RuvB to convert the ATP-contained energy into a lever motion, pulling 2 nucleotides of DNA out of the RuvA tetramer per ATP hydrolyzed, thus driving DNA branch migration. The RuvB motors rotate together with the DNA substrate, which together with the progressing nucleotide cycle form the mechanistic basis for DNA recombination by continuous HJ branch migration. Branch migration allows RuvC to scan DNA until it finds its consensus sequence, where it cleaves and resolves cruciform DNA. In Aliivibrio fischeri (strain ATCC 700601 / ES114) (Vibrio fischeri), this protein is Holliday junction branch migration complex subunit RuvB.